The primary structure comprises 437 residues: Probable D-serine dehydratase (437 aa).

At Lys106 the chain carries N6-(pyridoxal phosphate)lysine.

This sequence belongs to the serine/threonine dehydratase family. DsdA subfamily. It depends on pyridoxal 5'-phosphate as a cofactor.

The enzyme catalyses D-serine = pyruvate + NH4(+). The polypeptide is Probable D-serine dehydratase (Hahella chejuensis (strain KCTC 2396)).